Reading from the N-terminus, the 42-residue chain is Serine/threonine-protein phosphatase 5 (42 aa).

Positions 38–42 are required for autoinhibition; it reads QLGVM.

This sequence belongs to the PPP phosphatase family. PP-5 (PP-T) subfamily. Probably forms a complex composed of chaperones HSP90 and HSP70, co-chaperones STIP1/HOP, CDC37, PPP5C, PTGES3/p23, TSC1 and client protein TSC2. Probably forms a complex composed of chaperones HSP90 and HSP70, co-chaperones CDC37, PPP5C, TSC1 and client protein TSC2, CDK4, AKT, RAF1 and NR3C1; this complex does not contain co-chaperones STIP1/HOP and PTGES3/p23. Part of a complex with HSP90/HSP90AA1 and steroid receptors. Interacts (via TPR repeats) with HSP90AA1 (via TPR repeat-binding motif) or HSPA1A/HSPA1B; the interaction is direct and activates the phosphatase activity. Dissociates from HSPA1A/HSPA1B and HSP90AA1 in response to arachidonic acid. Interacts with CPNE1 (via VWFA domain). Interacts with CDC16, CDC27. Interacts with KLHDC10 (via the 6 Kelch repeats); inhibits the phosphatase activity on MAP3K5. Interacts with ATM and ATR; both interactions are induced by DNA damage and enhance ATM and ATR kinase activity. Interacts with RAD17; reduced by DNA damage. Interacts with nuclear receptors such as NR3C1/GCR and PPARG (activated by agonist); regulates their transactivation activities. Interacts (via TPR repeats) with S100 proteins S100A1, S100A2, S100A6, S100B and S100P; the interactions are calcium-dependent, strongly activate PPP5C phosphatase activity and compete with HSP90AA1 and MAP3K5 interactions. Interacts with SMAD2 and SMAD3 but not with SMAD1; decreases SMAD3 phosphorylation and protein levels. Interacts (via TPR repeats) with CRY1 and CRY2; the interaction with CRY2 down-regulates the phosphatase activity on CSNK1E. Interacts (via TPR repeats) with the active form of RAC1, GNA12 or GNA13; these interactions activate the phosphatase activity and translocate PPP5C to the cell membrane. Interacts with FLCN. It depends on Mg(2+) as a cofactor. Mn(2+) serves as cofactor. In terms of processing, activated by at least two different proteolytic cleavages producing a 56 kDa and a 50 kDa form.

The protein resides in the nucleus. Its subcellular location is the cytoplasm. It is found in the cell membrane. The catalysed reaction is O-phospho-L-seryl-[protein] + H2O = L-seryl-[protein] + phosphate. It carries out the reaction O-phospho-L-threonyl-[protein] + H2O = L-threonyl-[protein] + phosphate. Autoinhibited. In the autoinhibited state, the TPR domain interacts with the catalytic region and prevents substrate access to the catalytic pocket. Allosterically activated by various polyunsaturated fatty acids, free long-chain fatty-acids and long-chain fatty acyl-CoA esters, arachidonic acid being the most effective activator. HSP90A and probably RAC1, GNA12 and GNA13 can also release the autoinhibition by the TPR repeat. Activation by RAC1, GNA12 and GNA13 is synergistic with the one produced by fatty acids binding. Inhibited by okadaic acid. In terms of biological role, serine/threonine-protein phosphatase that dephosphorylates a myriad of proteins involved in different signaling pathways including the kinases CSNK1E, ASK1/MAP3K5, PRKDC and RAF1, the nuclear receptors NR3C1, PPARG, ESR1 and ESR2, SMAD proteins and TAU/MAPT. Implicated in wide ranging cellular processes, including apoptosis, differentiation, DNA damage response, cell survival, regulation of ion channels or circadian rhythms, in response to steroid and thyroid hormones, calcium, fatty acids, TGF-beta as well as oxidative and genotoxic stresses. Participates in the control of DNA damage response mechanisms such as checkpoint activation and DNA damage repair through, for instance, the regulation ATM/ATR-signaling and dephosphorylation of PRKDC and TP53BP1. Inhibits ASK1/MAP3K5-mediated apoptosis induced by oxidative stress. Plays a positive role in adipogenesis, mainly through the dephosphorylation and activation of PPARG transactivation function. Also dephosphorylates and inhibits the anti-adipogenic effect of NR3C1. Regulates the circadian rhythms, through the dephosphorylation and activation of CSNK1E. May modulate TGF-beta signaling pathway by the regulation of SMAD3 phosphorylation and protein expression levels. Dephosphorylates and may play a role in the regulation of TAU/MAPT. Through their dephosphorylation, may play a role in the regulation of ions channels such as KCNH2. Dephosphorylate FNIP1, disrupting interaction with HSP90AA1/Hsp90. This Oryctolagus cuniculus (Rabbit) protein is Serine/threonine-protein phosphatase 5 (PPP5C).